The chain runs to 44 residues: Photosystem I reaction center subunit IX (44 aa).

The chain crosses the membrane as a helical span at residues Tyr7–Ile27.

Belongs to the PsaJ family.

It is found in the plastid. The protein localises to the chloroplast thylakoid membrane. May help in the organization of the PsaE and PsaF subunits. This Lotus japonicus (Lotus corniculatus var. japonicus) protein is Photosystem I reaction center subunit IX.